Here is a 293-residue protein sequence, read N- to C-terminus: 33 kDa chaperonin (293 aa).

Cystine bridges form between C231–C233 and C264–C267.

It belongs to the HSP33 family. In terms of processing, under oxidizing conditions two disulfide bonds are formed involving the reactive cysteines. Under reducing conditions zinc is bound to the reactive cysteines and the protein is inactive.

It localises to the cytoplasm. Functionally, redox regulated molecular chaperone. Protects both thermally unfolding and oxidatively damaged proteins from irreversible aggregation. Plays an important role in the bacterial defense system toward oxidative stress. This chain is 33 kDa chaperonin, found in Yersinia pseudotuberculosis serotype O:1b (strain IP 31758).